Reading from the N-terminus, the 272-residue chain is NH(3)-dependent NAD(+) synthetase (272 aa).

45 to 52 (GISGGQDS) provides a ligand contact to ATP. Aspartate 51 is a binding site for Mg(2+). Residue arginine 138 coordinates deamido-NAD(+). Residue threonine 158 coordinates ATP. Glutamate 163 is a binding site for Mg(2+). Residues lysine 171 and aspartate 178 each coordinate deamido-NAD(+). Residues lysine 187 and threonine 209 each coordinate ATP. Position 258–259 (258–259 (HK)) interacts with deamido-NAD(+).

It belongs to the NAD synthetase family. In terms of assembly, homodimer.

It carries out the reaction deamido-NAD(+) + NH4(+) + ATP = AMP + diphosphate + NAD(+) + H(+). It functions in the pathway cofactor biosynthesis; NAD(+) biosynthesis; NAD(+) from deamido-NAD(+) (ammonia route): step 1/1. In terms of biological role, catalyzes the ATP-dependent amidation of deamido-NAD to form NAD. Uses ammonia as a nitrogen source. This chain is NH(3)-dependent NAD(+) synthetase, found in Bacillus velezensis (strain DSM 23117 / BGSC 10A6 / LMG 26770 / FZB42) (Bacillus amyloliquefaciens subsp. plantarum).